Here is a 59-residue protein sequence, read N- to C-terminus: Small EDRK-rich factor 2 (59 aa).

2 stretches are compositionally biased toward basic and acidic residues: residues 1–30 (MTRG…RDDG) and 50–59 (KANEKKEEPK). A disordered region spans residues 1-59 (MTRGNQRELARQKNMKKQSDSVKGKRRDDGLSAAARKQRDSEIMQQKQKKANEKKEEPK).

Belongs to the SERF family.

Positive regulator of amyloid protein aggregation and proteotoxicity. Induces conformational changes in amyloid proteins, such as HTT, driving them into compact formations preceding the formation of aggregates. This is Small EDRK-rich factor 2 (SERF2) from Plecturocebus moloch (Dusky titi monkey).